Here is a 1190-residue protein sequence, read N- to C-terminus: Laminin subunit gamma-2 (1190 aa).

A signal peptide spans 1-21 (MPALWLRCGLCLALLLPAARA). 12 disulfide bridges follow: cysteine 28-cysteine 37, cysteine 30-cysteine 53, cysteine 56-cysteine 65, cysteine 68-cysteine 81, cysteine 84-cysteine 96, cysteine 86-cysteine 102, cysteine 104-cysteine 113, cysteine 116-cysteine 128, cysteine 139-cysteine 150, cysteine 141-cysteine 155, cysteine 157-cysteine 166, and cysteine 169-cysteine 184. 3 consecutive Laminin EGF-like domains span residues 28–83 (CDCN…RCLP), 84–130 (CNCN…GCAQ), and 139–186 (CDCD…GCTQ). Residues 187–196 (CFCYGHSASC) form the Laminin EGF-like 4; first part domain. The Laminin IV type A domain occupies 213–381 (QDVDGWKAVQ…SGAPAPWVEQ (169 aa)). Residues asparagine 342 and asparagine 362 are each glycosylated (N-linked (GlcNAc...) asparagine). One can recognise a Laminin EGF-like 4; second part domain in the interval 382–415 (CVCPVGYKGQFCQDCASGYKRDSARLGPFGTCIP). Laminin EGF-like domains follow at residues 416–462 (CNCQ…SCKP), 463–517 (CPCR…PCQP), and 518–573 (CQCN…KCRA). Intrachain disulfides connect cysteine 463/cysteine 471, cysteine 465/cysteine 482, cysteine 485/cysteine 494, cysteine 497/cysteine 515, cysteine 518/cysteine 532, cysteine 520/cysteine 539, cysteine 542/cysteine 551, cysteine 554/cysteine 571, cysteine 574/cysteine 586, cysteine 576/cysteine 592, and cysteine 594/cysteine 603. The Laminin EGF-like 8; truncated domain occupies 574–603 (CNCNPVGSEPVECRSDGSCVCKPGFGGLSC). The tract at residues 604–1190 (EHAALTSCPA…CYNTQALEQQ (587 aa)) is domain II and I. Residues 613–718 (ACYNQVKVQM…GSQYQNQVQD (106 aa)) adopt a coiled-coil conformation. A glycan (O-linked (Xyl...) (chondroitin sulfate) serine) is linked at serine 803. 2 coiled-coil regions span residues 809 to 1073 (AVVQ…AVQM) and 1114 to 1190 (EERL…LEQQ). N-linked (GlcNAc...) asparagine glycans are attached at residues asparagine 939 and asparagine 1030.

In terms of assembly, laminin is a complex glycoprotein, consisting of three different polypeptide chains (alpha, beta, gamma), which are bound to each other by disulfide bonds into a cross-shaped molecule comprising one long and three short arms with globules at each end. Gamma-2 is a subunit of laminin-5 (laminin-332 or epiligrin/kalinin/nicein). In terms of processing, O-glycosylated; contains chondroitin sulfate (CS).

Its subcellular location is the secreted. It localises to the extracellular space. It is found in the extracellular matrix. The protein localises to the basement membrane. Functionally, binding to cells via a high affinity receptor, laminin is thought to mediate the attachment, migration and organization of cells into tissues during embryonic development by interacting with other extracellular matrix components. Ladsin exerts cell-scattering activity toward a wide variety of cells, including epithelial, endothelial, and fibroblastic cells. The chain is Laminin subunit gamma-2 (LAMC2) from Equus caballus (Horse).